A 658-amino-acid polypeptide reads, in one-letter code: Structure-specific endonuclease subunit SLX1 (658 aa).

The 81-residue stretch at 12–92 (PFYACYFLRS…AKPHLSRHLK (81 aa)) folds into the GIY-YIG domain. Disordered stretches follow at residues 29-52 (YIGSTPAPPRRKRQHNGHLTQGAY), 239-269 (GVAEHPVKKRQTSSRQKPHTEETSAWPETLP), 288-328 (PIPQ…NGVD), and 594-658 (TTSR…IDLT). Composition is skewed to basic and acidic residues over residues 308–324 (KLSDKARPSALEDHDAE) and 627–640 (SKIDGDGAGKDTKK). Polar residues predominate over residues 641-652 (NTTQKAKSNETS).

Belongs to the SLX1 family. In terms of assembly, forms a heterodimer with SLX4. A divalent metal cation serves as cofactor.

Its subcellular location is the nucleus. Catalytic subunit of the SLX1-SLX4 structure-specific endonuclease that resolves DNA secondary structures generated during DNA repair and recombination. Has endonuclease activity towards branched DNA substrates, introducing single-strand cuts in duplex DNA close to junctions with ss-DNA. The chain is Structure-specific endonuclease subunit SLX1 from Mycosarcoma maydis (Corn smut fungus).